A 252-amino-acid polypeptide reads, in one-letter code: 5-oxoprolinase subunit A (252 aa).

Belongs to the LamB/PxpA family. As to quaternary structure, forms a complex composed of PxpA, PxpB and PxpC.

It carries out the reaction 5-oxo-L-proline + ATP + 2 H2O = L-glutamate + ADP + phosphate + H(+). Catalyzes the cleavage of 5-oxoproline to form L-glutamate coupled to the hydrolysis of ATP to ADP and inorganic phosphate. This is 5-oxoprolinase subunit A from Kocuria rhizophila (strain ATCC 9341 / DSM 348 / NBRC 103217 / DC2201).